Consider the following 339-residue polypeptide: Phenylalanine--tRNA ligase alpha subunit (339 aa).

E262 is a binding site for Mg(2+).

Belongs to the class-II aminoacyl-tRNA synthetase family. Phe-tRNA synthetase alpha subunit type 1 subfamily. In terms of assembly, tetramer of two alpha and two beta subunits. Mg(2+) is required as a cofactor.

The protein localises to the cytoplasm. It catalyses the reaction tRNA(Phe) + L-phenylalanine + ATP = L-phenylalanyl-tRNA(Phe) + AMP + diphosphate + H(+). This Neisseria gonorrhoeae (strain ATCC 700825 / FA 1090) protein is Phenylalanine--tRNA ligase alpha subunit.